The chain runs to 142 residues: Large ribosomal subunit protein uL16 (142 aa).

It belongs to the universal ribosomal protein uL16 family. Part of the 50S ribosomal subunit.

Its function is as follows. Binds 23S rRNA and is also seen to make contacts with the A and possibly P site tRNAs. This chain is Large ribosomal subunit protein uL16, found in Thermosipho africanus (strain TCF52B).